Reading from the N-terminus, the 96-residue chain is YcgL domain-containing protein Csal_1462 (96 aa).

Residues 4 to 88 (RLCEIFKSPR…ARESYLLDLY (85 aa)) enclose the YcgL domain.

This is YcgL domain-containing protein Csal_1462 from Chromohalobacter salexigens (strain ATCC BAA-138 / DSM 3043 / CIP 106854 / NCIMB 13768 / 1H11).